The following is a 99-amino-acid chain: uncharacterized protein (99 aa).

An N-terminal signal peptide occupies residues 1–17 (MMMNSFFPAMALMVLVG). Cysteine 18 is lipidated: N-palmitoyl cysteine. Cysteine 18 carries the S-diacylglycerol cysteine lipid modification.

The protein localises to the cell membrane. This is an uncharacterized protein from Escherichia coli O157:H7.